Reading from the N-terminus, the 63-residue chain is Rubredoxin-2 (63 aa).

Residues 8–59 (YKLFRCLQCGFEYDEAIGWPDDGIEPGTRWDEIPEDWSCPDCGAAKVDFEMV) enclose the Rubredoxin-like domain. Cys13, Cys16, Cys46, and Cys49 together coordinate Fe cation.

The protein belongs to the rubredoxin family. Fe(3+) is required as a cofactor.

Involved in the hydrocarbon hydroxylating system, which transfers electrons from NADH to rubredoxin reductase and then through rubredoxin to alkane 1 monooxygenase. This Rhodococcus erythropolis (Arthrobacter picolinophilus) protein is Rubredoxin-2 (rubA2).